The following is a 146-amino-acid chain: Globin-2B (146 aa).

The Globin domain maps to 9–146 (QLTADVKKDL…KLVGVVQAAL (138 aa)). H101 is a heme b binding site.

Belongs to the globin family. In terms of assembly, homodimer.

The polypeptide is Globin-2B (Anadara trapezia (Sydney cockle)).